A 640-amino-acid chain; its full sequence is LRR receptor kinase SERL2 (640 aa).

The signal sequence occupies residues methionine 1–alanine 22. Topologically, residues leucine 23–alanine 241 are extracellular. 2 N-linked (GlcNAc...) asparagine glycosylation sites follow: asparagine 94 and asparagine 107. 4 LRR repeats span residues leucine 95–leucine 119, glutamate 120–leucine 143, serine 145–leucine 167, and serine 168–threonine 191. N-linked (GlcNAc...) asparagine glycans are attached at residues asparagine 153, asparagine 166, asparagine 179, and asparagine 222. A helical transmembrane segment spans residues valine 242–phenylalanine 262. Topologically, residues tryptophan 263–arginine 640 are cytoplasmic. Residues phenylalanine 304 to glutamate 583 form the Protein kinase domain. ATP-binding positions include leucine 310–valine 318 and lysine 332. Residue aspartate 427 is the Proton acceptor of the active site.

Belongs to the protein kinase superfamily. Ser/Thr protein kinase family. As to quaternary structure, interacts with MSBP1.

It is found in the cell membrane. It catalyses the reaction L-seryl-[protein] + ATP = O-phospho-L-seryl-[protein] + ADP + H(+). The catalysed reaction is L-threonyl-[protein] + ATP = O-phospho-L-threonyl-[protein] + ADP + H(+). Functionally, LRR receptor kinase that may be involved in defense response. The chain is LRR receptor kinase SERL2 from Oryza sativa subsp. japonica (Rice).